The primary structure comprises 143 residues: Small ribosomal subunit protein uS12 (143 aa).

This sequence belongs to the universal ribosomal protein uS12 family. In terms of assembly, component of the 40S small ribosomal subunit.

It localises to the cytoplasm. The protein resides in the cytosol. Its subcellular location is the rough endoplasmic reticulum. The chain is Small ribosomal subunit protein uS12 (rps23) from Gillichthys mirabilis (Long-jawed mudsucker).